The primary structure comprises 399 residues: Forkhead box protein I3 (399 aa).

Disordered regions lie at residues 87–109 (AGAQRGFAQPSASAPASPAGSAA), 221–287 (KRRR…ASTL), and 307–353 (SSSS…STVG). Residues 96 to 109 (PSASAPASPAGSAA) show a composition bias toward low complexity. Phosphoserine is present on residues serine 99 and serine 103. The fork-head DNA-binding region spans 129 to 223 (RPPYSYSALI…DNGNFRRKRR (95 aa)). The Nuclear localization signal motif lies at 219-225 (RRKRRRR). Polar residues-rich tracts occupy residues 228 to 248 (ASSNLTVPSGTSKSEGQSSRL) and 258 to 267 (SPSSILRPSQ). Phosphoserine is present on residues serine 258, serine 266, and serine 268. 3 stretches are compositionally biased toward polar residues: residues 275–287 (TKSTASSPGASTL), 307–317 (SSSSMGNQRTL), and 328–353 (QLPSSTFPNTSVPDSSPDSMQLSTVG). Residues 385–393 (SMVNSLIYP) carry the 9aaTAD motif.

Post-translationally, phosphorylation promotes the transcription factor activity. Dephosphorylation by protein phosphatase 2A (PP2A) reduces its activity. As to expression, specifically expressed in the epithelium in developing ectodermal appendages. Expressed in pharyngeal endoderm and ectoderm. Expressed in pre-placodal ectoderm. Down-regulated as the otic placode is induced. Expressed in teeth and hair follicles throughout embryogenesis. Expressed in mammary glands only during the earliest stages of development.

The protein localises to the nucleus. Transcription factor required for pharyngeal arch development, which is involved in hair, ear, jaw and dental development. May act as a pioneer transcription factor during pharyngeal arch development. Required for epithelial cell differentiation within the epidermis. Acts at multiple stages of otic placode induction: necessary for preplacodal ectoderm to execute an inner ear program. Required for hair follicle stem cell specification. Acts downstream of TBX1 for the formation of the thymus and parathyroid glands from the third pharyngeal pouch. In Mus musculus (Mouse), this protein is Forkhead box protein I3.